Here is a 356-residue protein sequence, read N- to C-terminus: Heme A synthase (356 aa).

The next 5 membrane-spanning stretches (helical) occupy residues 23–43 (IAIWLFVCCALVFAMVVVGGV), 105–125 (FHRLLGRVIGLAFFIPFLYFL), 141–161 (IFLLGALQGGMGWYMVKSGLV), 173–193 (AHLGLAFAIYAAMFWVALDLL), and 212–232 (STMLSALVFIMVLSGGFVAGI). A heme-binding site is contributed by H274. The next 3 membrane-spanning stretches (helical) occupy residues 276–296 (LIAWTLAILVPIFWLKSRAVP), 307–327 (LLLIMLAVQITLGISTLLLVV), and 329–349 (LTLAAAHQAGALLLFTAALWV). H335 serves as a coordination point for heme.

This sequence belongs to the COX15/CtaA family. Type 2 subfamily. As to quaternary structure, interacts with CtaB. The cofactor is heme b.

The protein localises to the cell membrane. The enzyme catalyses Fe(II)-heme o + 2 A + H2O = Fe(II)-heme a + 2 AH2. It participates in porphyrin-containing compound metabolism; heme A biosynthesis; heme A from heme O: step 1/1. Functionally, catalyzes the conversion of heme O to heme A by two successive hydroxylations of the methyl group at C8. The first hydroxylation forms heme I, the second hydroxylation results in an unstable dihydroxymethyl group, which spontaneously dehydrates, resulting in the formyl group of heme A. The polypeptide is Heme A synthase (Nitrosospira multiformis (strain ATCC 25196 / NCIMB 11849 / C 71)).